Consider the following 155-residue polypeptide: V-type proton ATPase 16 kDa proteolipid subunit c (155 aa).

Residues 1 to 10 (MSEAKNGPEY) are Lumenal-facing. Residues 11–33 (ASFFAVMGASAAMVFSALGAAYG) form a helical membrane-spanning segment. Residues 34–55 (TAKSGTGIAAMSVMRPEMIMKS) are Cytoplasmic-facing. Residues 56-76 (IIPVVMAGIIAIYGLVVAVLI) form a helical membrane-spanning segment. Residues 77-92 (ANSLNDGISLYRSFLQ) lie on the Lumenal side of the membrane. The helical transmembrane segment at 93–114 (LGAGLSVGLSGLAAGFAIGIVG) threads the bilayer. Over 115 to 131 (DAGVRGTAQQPRLFVGM) the chain is Cytoplasmic. A helical membrane pass occupies residues 132–152 (ILILIFAEVLGLYGLIVALIL). The Lumenal portion of the chain corresponds to 153 to 155 (STK).

It belongs to the V-ATPase proteolipid subunit family. V-ATPase is a heteromultimeric enzyme made up of two complexes: the ATP-hydrolytic V1 complex and the proton translocation V0 complex. The V1 complex consists of three catalytic AB heterodimers that form a heterohexamer, three peripheral stalks each consisting of EG heterodimers, one central rotor including subunits D and F, and the regulatory subunits C and H. The proton translocation complex V0 consists of the proton transport subunit a, a ring of proteolipid subunits c9c'', rotary subunit d, subunits e and f, and the accessory subunits ATP6AP1/Ac45 and ATP6AP2/PRR. Interacts with the V0 complex V-ATPase subunit a4 ATP6V0A4. Interacts with LASS2. Interacts with RNF182; this interaction leads to ubiquitination and degradation via the proteasome pathway. In terms of processing, ubiquitinated by RNF182, leading to its degradation via the ubiquitin-proteasome pathway. In terms of tissue distribution, expressed in brain (at protein level).

It is found in the cytoplasmic vesicle. Its subcellular location is the clathrin-coated vesicle membrane. It localises to the secretory vesicle. The protein resides in the synaptic vesicle membrane. Its function is as follows. Proton-conducting pore forming subunit of the V0 complex of vacuolar(H+)-ATPase (V-ATPase), a multisubunit enzyme composed of a peripheral complex (V1) that hydrolyzes ATP and a membrane integral complex (V0) that translocates protons. V-ATPase is responsible for acidifying and maintaining the pH of intracellular compartments and in some cell types, is targeted to the plasma membrane, where it is responsible for acidifying the extracellular environment. The polypeptide is V-type proton ATPase 16 kDa proteolipid subunit c (ATP6V0C) (Bos taurus (Bovine)).